We begin with the raw amino-acid sequence, 212 residues long: 2,3-bisphosphoglycerate-dependent phosphoglycerate mutase (212 aa).

Residues 9–16 (RHGQSEWN), 22–23 (TG), arginine 61, 88–91 (ERDY), lysine 99, 115–116 (RR), and 159–160 (GN) contribute to the substrate site. Histidine 10 serves as the catalytic Tele-phosphohistidine intermediate. Glutamate 88 (proton donor/acceptor) is an active-site residue.

This sequence belongs to the phosphoglycerate mutase family. BPG-dependent PGAM subfamily. As to quaternary structure, homodimer.

It catalyses the reaction (2R)-2-phosphoglycerate = (2R)-3-phosphoglycerate. It functions in the pathway carbohydrate degradation; glycolysis; pyruvate from D-glyceraldehyde 3-phosphate: step 3/5. Its function is as follows. Catalyzes the interconversion of 2-phosphoglycerate and 3-phosphoglycerate. This chain is 2,3-bisphosphoglycerate-dependent phosphoglycerate mutase, found in Methylorubrum populi (strain ATCC BAA-705 / NCIMB 13946 / BJ001) (Methylobacterium populi).